A 158-amino-acid polypeptide reads, in one-letter code: Cytochrome b6-f complex subunit 4 (158 aa).

The next 3 membrane-spanning stretches (helical) occupy residues 34 to 54, 93 to 113, and 129 to 149; these read LLYI…GLAV, LLGV…PFLE, and TVFL…TLPI.

Belongs to the cytochrome b family. PetD subfamily. In terms of assembly, the 4 large subunits of the cytochrome b6-f complex are cytochrome b6, subunit IV (17 kDa polypeptide, petD), cytochrome f and the Rieske protein, while the 4 small subunits are petG, petL, petM and petN. The complex functions as a dimer.

Its subcellular location is the plastid. It localises to the chloroplast thylakoid membrane. In terms of biological role, component of the cytochrome b6-f complex, which mediates electron transfer between photosystem II (PSII) and photosystem I (PSI), cyclic electron flow around PSI, and state transitions. The chain is Cytochrome b6-f complex subunit 4 from Liriodendron tulipifera (Tuliptree).